The chain runs to 378 residues: Probable pectin lyase A (378 aa).

Residues 1–18 form the signal peptide; the sequence is MKYQGLLAIAGCIASASA. Intrachain disulfides connect Cys81-Cys100 and Cys90-Cys224. Residue Asn127 is glycosylated (N-linked (GlcNAc...) asparagine). Arg254 is an active-site residue. Cys321 and Cys329 are oxidised to a cystine.

This sequence belongs to the polysaccharide lyase 1 family.

The protein localises to the secreted. The catalysed reaction is Eliminative cleavage of (1-&gt;4)-alpha-D-galacturonan methyl ester to give oligosaccharides with 4-deoxy-6-O-methyl-alpha-D-galact-4-enuronosyl groups at their non-reducing ends.. Its function is as follows. Pectinolytic enzymes consist of four classes of enzymes: pectin lyase, polygalacturonase, pectin methylesterase and rhamnogalacturonase. Among pectinolytic enzymes, pectin lyase is the most important in depolymerization of pectin, since it cleaves internal glycosidic bonds of highly methylated pectins. The sequence is that of Probable pectin lyase A (pelA) from Neosartorya fischeri (strain ATCC 1020 / DSM 3700 / CBS 544.65 / FGSC A1164 / JCM 1740 / NRRL 181 / WB 181) (Aspergillus fischerianus).